A 466-amino-acid chain; its full sequence is Alpha-1A adrenergic receptor (466 aa).

Topologically, residues 1 to 25 (MVFLSGNASDSSNCTQPPAPVNIPK) are extracellular. 2 N-linked (GlcNAc...) asparagine glycosylation sites follow: asparagine 7 and asparagine 13. Residues 26–51 (AILLGVILGVLILFGVPGNILVILSV) traverse the membrane as a helical segment. At 52 to 63 (ACHRHLHSVTHY) the chain is on the cytoplasmic side. Residues 64 to 89 (YIVNLAVADLLLTSTVLPFSAIFEIL) traverse the membrane as a helical segment. At 90–99 (GYWAFGRVFC) the chain is on the extracellular side. A helical transmembrane segment spans residues 100–122 (NIWAAVDVLCCTASIMSLCIISI). Residues 123 to 143 (DRYIGVSYPLRYPTIVTQRRG) are Cytoplasmic-facing. A helical transmembrane segment spans residues 144–168 (LRALLCLWALSLVISIGPLFGWRQP). Residues 169-181 (APQDETICQINED) are Extracellular-facing. Residues 182-205 (PSYVLFSALGSFYVPLAIILVMYC) form a helical membrane-spanning segment. Topologically, residues 206 to 272 (RVYVVAKRES…KFSREKKAAK (67 aa)) are cytoplasmic. Residues 273 to 297 (TLGIVVGCFVLCWLPFFLVMPIGSF) traverse the membrane as a helical segment. The Extracellular segment spans residues 298 to 304 (FPDFKPS). A helical membrane pass occupies residues 305 to 329 (ETVFKIVFWLGYLNSCINPIIYPCS). Topologically, residues 330–466 (SQEFKKAFQN…ISLSENGEEV (137 aa)) are cytoplasmic. Positions 334-349 (KKAFQNVLKIQCLRRK) match the Nuclear localization signal motif. Cysteine 345 carries S-palmitoyl cysteine lipidation.

It belongs to the G-protein coupled receptor 1 family. Adrenergic receptor subfamily. ADRA1A sub-subfamily. Homo- and heterooligomer. Heterooligomerizes with ADRA1B homooligomers in cardiac myocytes. Interacts with CAVIN4.

The protein resides in the nucleus membrane. Its subcellular location is the cell membrane. It localises to the cytoplasm. The protein localises to the membrane. It is found in the caveola. In terms of biological role, this alpha-adrenergic receptor mediates its action by association with G proteins that activate a phosphatidylinositol-calcium second messenger system. Its effect is mediated by G(q) and G(11) proteins. Nuclear ADRA1A-ADRA1B heterooligomers regulate phenylephrine (PE)-stimulated ERK signaling in cardiac myocytes. This chain is Alpha-1A adrenergic receptor (ADRA1A), found in Cavia porcellus (Guinea pig).